The primary structure comprises 1002 residues: Mannan endo-1,4-beta-mannosidase (1002 aa).

A signal peptide spans M1–A28. In terms of domain architecture, GH26 spans A49 to S396. A substrate-binding site is contributed by H144. E205 acts as the Proton donor in catalysis. 2 residues coordinate substrate: W210 and Y278. The active-site Nucleophile is the E316. K384 lines the substrate pocket. 2 consecutive CBM11 domains span residues V523–D703 and A717–T897. Disordered regions lie at residues R702–V722 and P888–T969. Polar residues predominate over residues P707–A719. 2 stretches are compositionally biased toward basic and acidic residues: residues T897–E913 and P952–L966. The LPXTG sorting signal motif lies at L966–G970. At T969 the chain carries Pentaglycyl murein peptidoglycan amidated threonine. The propeptide at G970 to E1002 is removed by sortase.

Belongs to the glycosyl hydrolase 26 family. In terms of assembly, homodimer.

It localises to the secreted. The protein localises to the cell wall. The catalysed reaction is Random hydrolysis of (1-&gt;4)-beta-D-mannosidic linkages in mannans, galactomannans and glucomannans.. Beta-mannanase likely involved in the utilization of carbohydrates in the human gut. Catalyzes the hydrolysis of different beta-1,4-linked mannans, such as ivory nut mannan, konjac glucomannan, as well as carob and guar gum galactomannans, to a mixture of oligosaccharides. The dominant product from ivory nut mannan is found to be mannotriose; mannobiose and mannotetraose are produced to a lesser extent. Does not hydrolyze mannobiose, and hydrolyzes mannotriose at a significantly lower rate than the longer oligosaccharides. The protein is Mannan endo-1,4-beta-mannosidase of Bifidobacterium adolescentis (strain ATCC 15703 / DSM 20083 / NCTC 11814 / E194a).